The chain runs to 335 residues: Pregnancy-specific beta-1-glycoprotein 2 (335 aa).

The signal sequence occupies residues 1–34 (MGPLSAPPCTEHIKWKGLLVTASLLNFWNLPTTA). The Ig-like V-type domain maps to 35–144 (QVTIEAQPPK…TGYFTFTLYL (110 aa)). N-linked (GlcNAc...) asparagine glycosylation is found at Asn61, Asn104, Asn111, and Asn199. Ig-like C2-type domains are found at residues 147 to 234 (PKPS…VTLN) and 239 to 317 (PDLP…TSLT). 2 disulfides stabilise this stretch: Cys169/Cys217 and Cys261/Cys301.

Belongs to the immunoglobulin superfamily. CEA family.

The protein localises to the secreted. The sequence is that of Pregnancy-specific beta-1-glycoprotein 2 (PSG2) from Homo sapiens (Human).